A 73-amino-acid polypeptide reads, in one-letter code: Large ribosomal subunit protein uL29 (73 aa).

Belongs to the universal ribosomal protein uL29 family.

The chain is Large ribosomal subunit protein uL29 (rpmC) from Synechocystis sp. (strain ATCC 27184 / PCC 6803 / Kazusa).